Reading from the N-terminus, the 98-residue chain is Flagellar hook-basal body complex protein FliE (98 aa).

Low complexity predominate over residues 1-23; sequence MNNINDLRLNNNISNTNKSQNST. The interval 1–24 is disordered; the sequence is MNNINDLRLNNNISNTNKSQNSTG.

Belongs to the FliE family.

Its subcellular location is the bacterial flagellum basal body. The polypeptide is Flagellar hook-basal body complex protein FliE (Campylobacter jejuni subsp. jejuni serotype O:2 (strain ATCC 700819 / NCTC 11168)).